The sequence spans 335 residues: 5-dehydro-2-deoxygluconokinase (335 aa).

It belongs to the carbohydrate kinase PfkB family.

It carries out the reaction 5-dehydro-2-deoxy-D-gluconate + ATP = 6-phospho-5-dehydro-2-deoxy-D-gluconate + ADP + H(+). The protein operates within polyol metabolism; myo-inositol degradation into acetyl-CoA; acetyl-CoA from myo-inositol: step 5/7. Catalyzes the phosphorylation of 5-dehydro-2-deoxy-D-gluconate (2-deoxy-5-keto-D-gluconate or DKG) to 6-phospho-5-dehydro-2-deoxy-D-gluconate (DKGP). The polypeptide is 5-dehydro-2-deoxygluconokinase (Geobacillus kaustophilus (strain HTA426)).